We begin with the raw amino-acid sequence, 173 residues long: Ribosome maturation factor RimM (173 aa).

One can recognise a PRC barrel domain in the interval 95 to 169; it reads EGSYYFKDIL…RIEVTLLEGL (75 aa).

It belongs to the RimM family. As to quaternary structure, binds ribosomal protein uS19.

The protein resides in the cytoplasm. Functionally, an accessory protein needed during the final step in the assembly of 30S ribosomal subunit, possibly for assembly of the head region. Essential for efficient processing of 16S rRNA. May be needed both before and after RbfA during the maturation of 16S rRNA. It has affinity for free ribosomal 30S subunits but not for 70S ribosomes. This Lactobacillus gasseri (strain ATCC 33323 / DSM 20243 / BCRC 14619 / CIP 102991 / JCM 1131 / KCTC 3163 / NCIMB 11718 / NCTC 13722 / AM63) protein is Ribosome maturation factor RimM.